The chain runs to 835 residues: MSRRKQGKPQHLSKREFSPEPLEAILTDDEPDHGPLGAPEGDHDLLTCGQCQMNFPLGDILIFIEHKRKQCNGSLCLEKGVDKPPSPSPIEMKKASNPVEVGIQVTPEDDDCLSTSSRGICPKQEHIADKLLHWRGLSSPRSAHGALIPTPGMSAEYAPQGICKDEPSSYTCTTCKQPFTSAWFLLQHAQNTHGLRIYLESEHGSPLTPRVGIPSGLGAECPSQPPLHGIHIADNNPFNLLRIPGSVSREASGLAEGRFPPTPPLFSPPPRHHLDPHRIERLGAEEMALATHHPSAFDRVLRLNPMAMEPPAMDFSRRLRELAGNTSSPPLSPGRPSPMQRLLQPFQPGSKPPFLATPPLPPLQSAPPPSQPPVKSKSCEFCGKTFKFQSNLVVHRRSHTGEKPYKCNLCDHACTQASKLKRHMKTHMHKSSPMTVKSDDGLSTASSPEPGTSDLVGSASSALKSVVAKFKSENDPNLIPENGDEEEEEDDEEEEEEEEEEEEELTESERVDYGFGLSLEAARHHENSSRGAVVGVGDEGRALPDVMQGMVLSSMQHFSEAFHQVLGEKHKRSHLAEAEGHRDTCDEDSVAGESDRIDDGTVNGRGCSPGESASGGLSKKLLLGSPSSLSPFSKRIKLEKEFDLPPAAMPNTENVYSQWLAGYAASRQLKDPFLTFGDSRQSPFASSSEHSSENGSLRFSTPPGELDGGISGRSGTGSGGSTPHISGPGPGRPSSKEGRRSDTCEYCGKVFKNCSNLTVHRRSHTGERPYKCELCNYACAQSSKLTRHMKTHGQVGKDVYKCEICKMPFSVYSTLEKHMKKWHSDRVLNNDIKTE.

Residues 1–12 show a composition bias toward basic residues; sequence MSRRKQGKPQHL. The tract at residues 1–41 is disordered; the sequence is MSRRKQGKPQHLSKREFSPEPLEAILTDDEPDHGPLGAPEG. The required for nuclear body formation and for SUMO1 recruitment stretch occupies residues 1 to 210; that stretch reads MSRRKQGKPQ…SEHGSPLTPR (210 aa). The C2HC-type zinc finger occupies 45–71; it reads LLTCGQCQMNFPLGDILIFIEHKRKQC. Zn(2+)-binding residues include Cys-48, Cys-51, His-66, and Cys-71. At Ser-86 the chain carries Phosphoserine. Lys-123 is covalently cross-linked (Glycyl lysine isopeptide (Lys-Gly) (interchain with G-Cter in SUMO2)). At Ile-162 the chain carries Phosphothreonine. Residue Lys-164 forms a Glycyl lysine isopeptide (Lys-Gly) (interchain with G-Cter in SUMO2) linkage. The segment at 170–193 adopts a C2H2-type 1 zinc-finger fold; sequence YTCTTCKQPFTSAWFLLQHAQNTH. At Ser-205 the chain carries Phosphoserine. At Pro-214 the chain carries Phosphothreonine. Arg-271 bears the Asymmetric dimethylarginine mark. The tract at residues 323–376 is disordered; that stretch reads AGNTSSPPLSPGRPSPMQRLLQPFQPGSKPPFLATPPLPPLQSAPPPSQPPVKS. Phosphoserine is present on residues Ser-332 and Ser-337. Pro residues predominate over residues 355-372; it reads LATPPLPPLQSAPPPSQP. C2H2-type zinc fingers lie at residues 377 to 399 and 405 to 429; these read KSCE…RRSH and YKCN…THMH. Positions 421-430 are enriched in basic residues; sequence KRHMKTHMHK. 3 disordered regions span residues 421–458, 471–512, and 572–619; these read KRHM…LVGS, KSEN…ERVD, and RSHL…GLSK. The span at 441 to 450 shows a compositional bias: polar residues; it reads GLSTASSPEP. Phosphoserine occurs at positions 446 and 447. Over residues 482-506 the composition is skewed to acidic residues; it reads NGDEEEEEDDEEEEEEEEEEEEELT. Basic and acidic residues predominate over residues 574-584; the sequence is HLAEAEGHRDT. Position 608 is a phosphoserine (Ser-608). Residue Lys-620 forms a Glycyl lysine isopeptide (Lys-Gly) (interchain with G-Cter in SUMO2) linkage. Phosphoserine is present on residues Ser-625 and Ser-630. Residue Lys-634 forms a Glycyl lysine isopeptide (Lys-Gly) (interchain with G-Cter in SUMO1) linkage. Residues 682 to 696 show a composition bias toward low complexity; sequence SPFASSSEHSSENGS. Thr-701 carries the post-translational modification Phosphothreonine. Residues 706–720 show a composition bias toward gly residues; that stretch reads LDGGISGRSGTGSGG. The tract at residues 737–835 is DNA-binding; that stretch reads EGRRSDTCEY…RVLNNDIKTE (99 aa). The C2H2-type 4 zinc finger occupies 742–764; the sequence is DTCEYCGKVFKNCSNLTVHRRSH. 4 residues coordinate Zn(2+): Cys-744, Cys-747, His-760, and His-764. Polar residues predominate over residues 764 to 773; the sequence is HTGERPYKCE. Positions 765 to 769 are disordered; that stretch reads TGERP. The C2H2-type 5 zinc-finger motif lies at 770 to 792; it reads YKCELCNYACAQSSKLTRHMKTH. Zn(2+)-binding residues include Cys-772, Cys-775, His-788, and His-792. The tract at residues 793–799 is disordered; that stretch reads GQVGKDV. Residues 800-823 form a C2H2-type 6 zinc finger; it reads YKCEICKMPFSVYSTLEKHMKKWH. Cys-802, Cys-805, His-818, and His-823 together coordinate Zn(2+).

Homotetrameric; self-associates via C2HC-type zinc finger domain. Interacts with MTA2, a component of the nucleosome remodeling and deacetylase (NuRD) repressor complex. Interacts with NR2F1, PIAS3, NR2F2 and NR2F6. Interacts with TBR1. Sumoylated with SUMO1. In terms of tissue distribution, isoforms are expressed in a tissue-specific fashion. Isoforms 1, isoform 2, and isoform 3 are expressed at similar levels in testis, kidney and spleen. Isoform 1 is expressed in the stomach, and isoform 2 is expressed exclusively in the lung. Overexpression following proviral integration in hematopoietic cells results in the generation of myeloid leukemia.

The protein resides in the cytoplasm. It is found in the nucleus. Transcription factor. Associated with the BAF SWI/SNF chromatin remodeling complex. Binds to the 5'-TGACCA-3' sequence motif in regulatory regions of target genes. Involved in brain development. May play a role in hematopoiesis. Essential factor in lymphopoiesis, required for B-cell formation in fetal liver. May function as a modulator of the transcriptional repression activity of NR2F2. The polypeptide is BCL11 transcription factor A (Bcl11a) (Mus musculus (Mouse)).